The chain runs to 207 residues: Urease accessory protein UreG (207 aa).

12–19 (GPVGAGKT) is a binding site for GTP.

It belongs to the SIMIBI class G3E GTPase family. UreG subfamily. As to quaternary structure, homodimer. UreD, UreF and UreG form a complex that acts as a GTP-hydrolysis-dependent molecular chaperone, activating the urease apoprotein by helping to assemble the nickel containing metallocenter of UreC. The UreE protein probably delivers the nickel.

The protein localises to the cytoplasm. In terms of biological role, facilitates the functional incorporation of the urease nickel metallocenter. This process requires GTP hydrolysis, probably effectuated by UreG. In Cereibacter sphaeroides (strain ATCC 17025 / ATH 2.4.3) (Rhodobacter sphaeroides), this protein is Urease accessory protein UreG.